The chain runs to 118 residues: Hydrogenase maturation factor HypA (118 aa).

His2 contacts Ni(2+). 4 residues coordinate Zn(2+): Cys74, Cys77, Cys91, and Cys94.

The protein belongs to the HypA/HybF family.

Involved in the maturation of [NiFe] hydrogenases. Required for nickel insertion into the metal center of the hydrogenase. The protein is Hydrogenase maturation factor HypA of Helicobacter hepaticus (strain ATCC 51449 / 3B1).